A 211-amino-acid polypeptide reads, in one-letter code: ATP-dependent Clp protease proteolytic subunit (211 aa).

The Nucleophile role is filled by Ser107. His132 is a catalytic residue.

This sequence belongs to the peptidase S14 family. In terms of assembly, fourteen ClpP subunits assemble into 2 heptameric rings which stack back to back to give a disk-like structure with a central cavity, resembling the structure of eukaryotic proteasomes.

Its subcellular location is the cytoplasm. The enzyme catalyses Hydrolysis of proteins to small peptides in the presence of ATP and magnesium. alpha-casein is the usual test substrate. In the absence of ATP, only oligopeptides shorter than five residues are hydrolyzed (such as succinyl-Leu-Tyr-|-NHMec, and Leu-Tyr-Leu-|-Tyr-Trp, in which cleavage of the -Tyr-|-Leu- and -Tyr-|-Trp bonds also occurs).. Its function is as follows. Cleaves peptides in various proteins in a process that requires ATP hydrolysis. Has a chymotrypsin-like activity. Plays a major role in the degradation of misfolded proteins. The sequence is that of ATP-dependent Clp protease proteolytic subunit from Xanthobacter autotrophicus (strain ATCC BAA-1158 / Py2).